The following is a 178-amino-acid chain: MQKVRLQGSVAYVFKVFTESLKKMEIDPVAGAINEKTALVAVKYKHFAEKITADINKELWNMKIKDGKLFLVGMKELVDEDLREVNSKILSKLKKFGIDAGAYVTDDGDAVIMVSLNDVIIRILEKTLQETKVRAGNHMRNLRVKFGNDDKYAYTVIYSRNSKNESVVKDVEEVLKDE.

This is an uncharacterized protein from Sulfolobus islandicus filamentous virus (isolate Iceland/Hveragerdi) (SIFV).